The following is a 72-amino-acid chain: Translation initiation factor IF-1 (72 aa).

Residues 2–72 (AKDDVIEVDG…TRGRITYRFK (71 aa)) form the S1-like domain.

Belongs to the IF-1 family. As to quaternary structure, component of the 30S ribosomal translation pre-initiation complex which assembles on the 30S ribosome in the order IF-2 and IF-3, IF-1 and N-formylmethionyl-tRNA(fMet); mRNA recruitment can occur at any time during PIC assembly.

Its subcellular location is the cytoplasm. Functionally, one of the essential components for the initiation of protein synthesis. Stabilizes the binding of IF-2 and IF-3 on the 30S subunit to which N-formylmethionyl-tRNA(fMet) subsequently binds. Helps modulate mRNA selection, yielding the 30S pre-initiation complex (PIC). Upon addition of the 50S ribosomal subunit IF-1, IF-2 and IF-3 are released leaving the mature 70S translation initiation complex. In Lactococcus lactis subsp. lactis (strain IL1403) (Streptococcus lactis), this protein is Translation initiation factor IF-1.